Here is a 473-residue protein sequence, read N- to C-terminus: Serine palmitoyltransferase 1 (473 aa).

The Lumenal portion of the chain corresponds to 1-15; the sequence is MATVAEQWVLVEMVQ. An interaction with SPTLC2 region spans residues 1 to 66; that stretch reads MATVAEQWVL…KEELIEEWQP (66 aa). The helical transmembrane segment at 16–36 threads the bilayer; sequence ALYEAPAYHLILEGILILWII. The Cytoplasmic portion of the chain corresponds to 37–473; the sequence is RLVFSKTYKL…IREAAQAVLL (437 aa). Residue Tyr-164 is modified to Phosphotyrosine; by ABL.

It belongs to the class-II pyridoxal-phosphate-dependent aminotransferase family. In terms of assembly, component of the serine palmitoyltransferase (SPT) complex, which is also composed of SPTLC2 or SPTLC3 and SPTSSA or SPTSSB. The heterodimer with SPTLC2 or SPTLC3 forms the catalytic core of the enzyme, while SPTSSA or SPTSSB subunits determine substrate specificity. SPT also interacts with ORMDL proteins, especially ORMDL3, which negatively regulate SPT activity in the presence of ceramides. Forms dimers of heterodimers with SPTLC2. Interacts with RTN4 (isoform B). It depends on pyridoxal 5'-phosphate as a cofactor. Phosphorylation at Tyr-164 inhibits activity and promotes cell survival. Expressed in a variety of tissues. Highest expression in brain, kidney and liver. Expressed in brown and white adipose tissues.

It localises to the endoplasmic reticulum membrane. The catalysed reaction is L-serine + hexadecanoyl-CoA + H(+) = 3-oxosphinganine + CO2 + CoA. The enzyme catalyses octadecanoyl-CoA + L-serine + H(+) = 3-oxoeicosasphinganine + CO2 + CoA. It carries out the reaction tetradecanoyl-CoA + L-serine + H(+) = 3-oxohexadecasphinganine + CO2 + CoA. It catalyses the reaction dodecanoyl-CoA + L-serine + H(+) = 3-oxotetradecasphinganine + CO2 + CoA. Its pathway is lipid metabolism; sphingolipid metabolism. With respect to regulation, SPT complex catalytic activity is negatively regulated by ORMDL proteins, including ORMDL3, in the presence of ceramides. This mechanism allows to maintain ceramide levels at sufficient concentrations for the production of complex sphingolipids, but which prevents the accumulation of ceramides to levels that trigger apoptosis. In terms of biological role, component of the serine palmitoyltransferase multisubunit enzyme (SPT) that catalyzes the initial and rate-limiting step in sphingolipid biosynthesis by condensing L-serine and activated acyl-CoA (most commonly palmitoyl-CoA) to form long-chain bases. The SPT complex is also composed of SPTLC2 or SPTLC3 and SPTSSA or SPTSSB. Within this complex, the heterodimer with SPTLC2 or SPTLC3 forms the catalytic core. The composition of the serine palmitoyltransferase (SPT) complex determines the substrate preference. The SPTLC1-SPTLC2-SPTSSA complex shows a strong preference for C16-CoA substrate, while the SPTLC1-SPTLC3-SPTSSA isozyme uses both C14-CoA and C16-CoA as substrates, with a slight preference for C14-CoA. The SPTLC1-SPTLC2-SPTSSB complex shows a strong preference for C18-CoA substrate, while the SPTLC1-SPTLC3-SPTSSB isozyme displays an ability to use a broader range of acyl-CoAs, without apparent preference. Required for adipocyte cell viability and metabolic homeostasis. The chain is Serine palmitoyltransferase 1 (Sptlc1) from Mus musculus (Mouse).